Reading from the N-terminus, the 60-residue chain is Protein P7 (60 aa).

Residues 28 to 48 (FIGVTLIGMFISYYLYALISI) traverse the membrane as a helical segment.

It localises to the host membrane. This Vitis vinifera (Grape) protein is Protein P7.